A 69-amino-acid chain; its full sequence is UPF0337 protein DIP1660 (69 aa).

Basic and acidic residues-rich tracts occupy residues M1–V19 and D30–V41. The disordered stretch occupies residues M1 to K42.

It belongs to the UPF0337 (CsbD) family.

In Corynebacterium diphtheriae (strain ATCC 700971 / NCTC 13129 / Biotype gravis), this protein is UPF0337 protein DIP1660.